The chain runs to 300 residues: MKRARFVVLGSGAASPAPERALPAHYFEYEGVGALLDCGEGTQFQLMKAKISFSRIKVVFVSHLHGDHVLGLPGLLQTMAMASRRDELLVIGPKGLKDFLLSSFELTYFYPPYPIKVVEVLRDAEITYRNLKLKVFPVNHTVPAFGVSVETASKRKVRADVLEREGLPKRLWGRLQRGEDVVWEGRVFKYEDFTFEGERIKVVYSGDTAPCERLVEEAEGADLLVHEATFTKELKEEAHDRGHSTAEDAATAAARAGVKQLLMVHFSARYKDLRRHLEEARRVFPRSYAAEDLTKVVILK.

Zn(2+) contacts are provided by histidine 63, histidine 65, aspartate 67, histidine 68, histidine 140, aspartate 207, and histidine 265. The active-site Proton acceptor is the aspartate 67.

Belongs to the RNase Z family. As to quaternary structure, homodimer. The cofactor is Zn(2+).

The enzyme catalyses Endonucleolytic cleavage of RNA, removing extra 3' nucleotides from tRNA precursor, generating 3' termini of tRNAs. A 3'-hydroxy group is left at the tRNA terminus and a 5'-phosphoryl group is left at the trailer molecule.. In terms of biological role, zinc phosphodiesterase, which displays some tRNA 3'-processing endonuclease activity. Probably involved in tRNA maturation, by removing a 3'-trailer from precursor tRNA. This is Ribonuclease Z from Ignicoccus hospitalis (strain KIN4/I / DSM 18386 / JCM 14125).